Reading from the N-terminus, the 295-residue chain is Release factor glutamine methyltransferase (295 aa).

S-adenosyl-L-methionine contacts are provided by residues 127-131 (GTGSG), Asp-150, Phe-179, and Asn-195. Substrate is bound at residue 195-198 (NPPY).

Belongs to the protein N5-glutamine methyltransferase family. PrmC subfamily.

It catalyses the reaction L-glutaminyl-[peptide chain release factor] + S-adenosyl-L-methionine = N(5)-methyl-L-glutaminyl-[peptide chain release factor] + S-adenosyl-L-homocysteine + H(+). Methylates the class 1 translation termination release factors RF1/PrfA and RF2/PrfB on the glutamine residue of the universally conserved GGQ motif. The polypeptide is Release factor glutamine methyltransferase (Nitratidesulfovibrio vulgaris (strain ATCC 29579 / DSM 644 / CCUG 34227 / NCIMB 8303 / VKM B-1760 / Hildenborough) (Desulfovibrio vulgaris)).